The sequence spans 221 residues: UPF0502 protein Sputw3181_2381 (221 aa).

The protein belongs to the UPF0502 family.

The chain is UPF0502 protein Sputw3181_2381 from Shewanella sp. (strain W3-18-1).